We begin with the raw amino-acid sequence, 131 residues long: Large ribosomal subunit protein eL32 (131 aa).

It belongs to the eukaryotic ribosomal protein eL32 family. In terms of assembly, component of the large ribosomal subunit. Mature ribosomes consist of a small (40S) and a large (60S) subunit. The 40S subunit contains about 32 different proteins and 1 molecule of RNA (18S). The 60S subunit contains 45 different proteins and 3 molecules of RNA (25S, 5.8S and 5S).

Its subcellular location is the cytoplasm. In terms of biological role, component of the ribosome, a large ribonucleoprotein complex responsible for the synthesis of proteins in the cell. The small ribosomal subunit (SSU) binds messenger RNAs (mRNAs) and translates the encoded message by selecting cognate aminoacyl-transfer RNA (tRNA) molecules. The large subunit (LSU) contains the ribosomal catalytic site termed the peptidyl transferase center (PTC), which catalyzes the formation of peptide bonds, thereby polymerizing the amino acids delivered by tRNAs into a polypeptide chain. The nascent polypeptides leave the ribosome through a tunnel in the LSU and interact with protein factors that function in enzymatic processing, targeting, and the membrane insertion of nascent chains at the exit of the ribosomal tunnel. This chain is Large ribosomal subunit protein eL32, found in Candida albicans (strain SC5314 / ATCC MYA-2876) (Yeast).